The chain runs to 77 residues: Small ribosomal subunit protein bS18 (77 aa).

The protein belongs to the bacterial ribosomal protein bS18 family. In terms of assembly, part of the 30S ribosomal subunit. Forms a tight heterodimer with protein bS6.

Binds as a heterodimer with protein bS6 to the central domain of the 16S rRNA, where it helps stabilize the platform of the 30S subunit. The protein is Small ribosomal subunit protein bS18 of Bacillus cereus (strain ATCC 10987 / NRS 248).